A 73-amino-acid chain; its full sequence is Small ribosomal subunit protein uS15c (73 aa).

Belongs to the universal ribosomal protein uS15 family. As to quaternary structure, part of the 30S ribosomal subunit.

Its subcellular location is the plastid. The protein resides in the chloroplast. This is Small ribosomal subunit protein uS15c (rps15) from Welwitschia mirabilis (Tree tumbo).